Reading from the N-terminus, the 470-residue chain is Coproporphyrinogen III oxidase (470 aa).

Residues 12 to 17 (GGGITG), 41 to 42 (EA), Lys-49, 63 to 66 (GPDS), Val-256, Trp-409, and 448 to 450 (VGI) each bind FAD.

Belongs to the protoporphyrinogen/coproporphyrinogen oxidase family. Coproporphyrinogen III oxidase subfamily. In terms of assembly, monomer. The cofactor is FAD.

The protein localises to the cytoplasm. Its subcellular location is the cell membrane. It catalyses the reaction coproporphyrinogen III + 3 O2 = coproporphyrin III + 3 H2O2. The protein operates within porphyrin-containing compound metabolism; protoheme biosynthesis. With respect to regulation, only weakly inhibited by acifluorfen, in contrast to eukaryotic family members. Weakly inhibited by methylacifluorfen. Bilirubin, biliverdin and hemin are all competitive inhibitors. Involved in coproporphyrin-dependent heme b biosynthesis. Catalyzes the oxidation of coproporphyrinogen III to coproporphyrin III. Can also oxidize protoporphyrinogen IX to protoporphyrin-IX. The specific activity for the oxidation of coproporphyrinogen III is much higher than that for the oxidation of protoporphyrinogen IX. Can also oxidize mesoporphyrinogen IX, but not uroporphyrinogen III. This Bacillus subtilis (strain 168) protein is Coproporphyrinogen III oxidase.